Here is a 426-residue protein sequence, read N- to C-terminus: Serine--tRNA ligase (426 aa).

Residues 36 to 66 (KRKHLQERTQDLQSQRNTISKEIGQKKAKGE) are disordered. Polar residues predominate over residues 46-55 (DLQSQRNTIS). 233–235 (TAE) is a binding site for L-serine. 264–266 (RSE) is an ATP binding site. Residue Glu-287 participates in L-serine binding. Residue 351–354 (EISS) coordinates ATP. L-serine is bound at residue Ser-387.

It belongs to the class-II aminoacyl-tRNA synthetase family. Type-1 seryl-tRNA synthetase subfamily. As to quaternary structure, homodimer. The tRNA molecule binds across the dimer.

The protein resides in the cytoplasm. It carries out the reaction tRNA(Ser) + L-serine + ATP = L-seryl-tRNA(Ser) + AMP + diphosphate + H(+). The catalysed reaction is tRNA(Sec) + L-serine + ATP = L-seryl-tRNA(Sec) + AMP + diphosphate + H(+). It functions in the pathway aminoacyl-tRNA biosynthesis; selenocysteinyl-tRNA(Sec) biosynthesis; L-seryl-tRNA(Sec) from L-serine and tRNA(Sec): step 1/1. In terms of biological role, catalyzes the attachment of serine to tRNA(Ser). Is also able to aminoacylate tRNA(Sec) with serine, to form the misacylated tRNA L-seryl-tRNA(Sec), which will be further converted into selenocysteinyl-tRNA(Sec). The protein is Serine--tRNA ligase of Francisella tularensis subsp. holarctica (strain FTNF002-00 / FTA).